The primary structure comprises 516 residues: Homeobox protein 6 (516 aa).

Over residues Asn-22–Ser-31 the composition is skewed to low complexity. Disordered regions lie at residues Asn-22–Asn-140, Ser-200–Ser-256, and Asp-268–Asp-348. Residues Ile-32 to Ser-41 show a composition bias toward gly residues. Composition is skewed to low complexity over residues Ser-42–Gly-59, Ser-66–Ser-78, and Thr-101–Ser-132. Residues Asn-284–Asn-346 show a composition bias toward low complexity. 2 consecutive DNA-binding regions (homeobox) follow at residues Lys-362 to Gly-421 and Ser-424 to Ser-483. Residues Ser-483–Phe-516 form a disordered region. Low complexity predominate over residues Asn-495–Glu-504. The segment covering Asn-505–Phe-516 has biased composition (acidic residues).

It localises to the nucleus. Its function is as follows. Putative transcription factor. The protein is Homeobox protein 6 (hbx6) of Dictyostelium discoideum (Social amoeba).